Reading from the N-terminus, the 239-residue chain is Major prion protein (239 aa).

Residues M1–C15 form the signal peptide. Residues C15–K98 form a disordered region. The interaction with ADGRG6 stretch occupies residues K16–Y31. The interval K16–S222 is interaction with GRB2, ERI3 and SYN1. A run of 5 repeats spans residues P44 to Q51, P52 to Q59, P60 to Q67, P68 to Q75, and P76 to Q83. The interval P44–Q83 is 5 X 8 AA tandem repeats of P-H-G-G-G-W-G-Q. Residues G47 to T87 show a composition bias toward gly residues. Residues H53, G54, G55, H61, G62, G63, H69, G70, G71, H77, G78, and G79 each coordinate Cu(2+). C171 and C206 are joined by a disulfide. N173 and N189 each carry an N-linked (GlcNAc...) asparagine glycan. A lipid anchor (GPI-anchor amidated serine) is attached at S222. Residues S223–L239 constitute a propeptide, removed in mature form.

Belongs to the prion family. In terms of assembly, monomer and homodimer. Has a tendency to aggregate into amyloid fibrils containing a cross-beta spine, formed by a steric zipper of superposed beta-strands. Soluble oligomers may represent an intermediate stage on the path to fibril formation. Copper binding may promote oligomerization. Interacts with GRB2, APP, ERI3/PRNPIP and SYN1. Mislocalized cytosolically exposed PrP interacts with MGRN1; this interaction alters MGRN1 subcellular location and causes lysosomal enlargement. Interacts with APP. Interacts with KIAA1191. Interacts with ADGRG6.

It is found in the cell membrane. The protein localises to the golgi apparatus. Functionally, its primary physiological function is unclear. May play a role in neuronal development and synaptic plasticity. May be required for neuronal myelin sheath maintenance. May promote myelin homeostasis through acting as an agonist for ADGRG6 receptor. May play a role in iron uptake and iron homeostasis. Soluble oligomers are toxic to cultured neuroblastoma cells and induce apoptosis (in vitro). Association with GPC1 (via its heparan sulfate chains) targets PRNP to lipid rafts. Also provides Cu(2+) or Zn(2+) for the ascorbate-mediated GPC1 deaminase degradation of its heparan sulfate side chains. This Aotus trivirgatus (Three-striped night monkey) protein is Major prion protein (PRNP).